The primary structure comprises 142 residues: Ribosome-binding factor A (142 aa).

The protein belongs to the RbfA family. As to quaternary structure, monomer. Binds 30S ribosomal subunits, but not 50S ribosomal subunits or 70S ribosomes.

It localises to the cytoplasm. In terms of biological role, one of several proteins that assist in the late maturation steps of the functional core of the 30S ribosomal subunit. Associates with free 30S ribosomal subunits (but not with 30S subunits that are part of 70S ribosomes or polysomes). Required for efficient processing of 16S rRNA. May interact with the 5'-terminal helix region of 16S rRNA. The chain is Ribosome-binding factor A from Leifsonia xyli subsp. xyli (strain CTCB07).